Here is a 535-residue protein sequence, read N- to C-terminus: MKKSIVYEIMETKSSMYLSQFRLWLCFIITTLVSLSSSTRWYDDHISLKEIHAEETFHFPKNFLFGTASSAYQYEGAYLTDGKTLSNWDVFTNISGKIADGSHGKVAVDHYHRYPGDLDLMEDLGVNSYRLSLSWARILPKGRFGDVNMGGIDHYNRMINDILKTGIEPFVTLTHYDIPQELEYRYGSWLNPQIREDFEHYANICFRHFGDRVKFWSTFNEPNVQVILGYRTGTYPPSRCSKPFGNCSCGDSYIEPLVAAHNIILSHLAAVNLYRTKFQEQQRGQIGIVMNTIWFEPISDSLADRLAADRAQAFYLTWFLDPVVFGRYPREMREILGDDLPEFTKDDLKSSKNALDFIGINQYTSRYAKDCLHSVCEPGKGGSRAEGFVYANALKDGLRLGEPVGMEEMLMYATERYKNITLYVTENGFGENNTGVLLNDYQRVKFMSNYLDALKRAMRKGADVRGYFAWSLLDNFEWISGYTIRFGMYHVDFSTQERTPRLSASWYKNFIFQHRALSKDDWCLKQKEDTNFFLI.

The first 38 residues, 1–38 (MKKSIVYEIMETKSSMYLSQFRLWLCFIITTLVSLSSS), serve as a signal peptide directing secretion. An a beta-D-glucoside-binding site is contributed by Q73. N93 is a glycosylation site (N-linked (GlcNAc...) asparagine). A beta-D-glucoside contacts are provided by residues H175 and 220-221 (NE). The active-site Proton donor is the E221. Cysteines 240 and 247 form a disulfide. An N-linked (GlcNAc...) asparagine glycan is attached at N246. Residue Y363 participates in a beta-D-glucoside binding. The cysteines at positions 371 and 376 are disulfide-linked. N419 is a glycosylation site (N-linked (GlcNAc...) asparagine). E426 is an a beta-D-glucoside binding site. The Nucleophile role is filled by E426. N-linked (GlcNAc...) asparagine glycosylation occurs at N432. A beta-D-glucoside contacts are provided by residues W470, 477–478 (EW), and F486.

The protein belongs to the glycosyl hydrolase 1 family.

It catalyses the reaction Hydrolysis of terminal, non-reducing beta-D-glucosyl residues with release of beta-D-glucose.. In Arabidopsis thaliana (Mouse-ear cress), this protein is Beta-glucosidase 47.